Here is a 375-residue protein sequence, read N- to C-terminus: tRNA-specific 2-thiouridylase MnmA (375 aa).

Residues 20–27 (AMSGGVDS) and Leu46 each bind ATP. Catalysis depends on Cys114, which acts as the Nucleophile. Cys114 and Cys211 are joined by a disulfide. Position 138 (Gly138) interacts with ATP. An interaction with tRNA region spans residues 160–162 (RDQ). Cys211 (cysteine persulfide intermediate) is an active-site residue.

Belongs to the MnmA/TRMU family.

The protein resides in the cytoplasm. The enzyme catalyses S-sulfanyl-L-cysteinyl-[protein] + uridine(34) in tRNA + AH2 + ATP = 2-thiouridine(34) in tRNA + L-cysteinyl-[protein] + A + AMP + diphosphate + H(+). Catalyzes the 2-thiolation of uridine at the wobble position (U34) of tRNA, leading to the formation of s(2)U34. This is tRNA-specific 2-thiouridylase MnmA from Ruegeria pomeroyi (strain ATCC 700808 / DSM 15171 / DSS-3) (Silicibacter pomeroyi).